Reading from the N-terminus, the 384-residue chain is MKCPNYTEDSTVLCHMEKTETDLGEVKGHKVSPRKTGALSLRSPAATNVSTPLESRSKGPHNKENYQNKRHSLDMASDDEVIFSGSGLTEDSGYLSLHNSQVDVDGLDSLERSEENCVSSQSLDVECHSGPCLPVLNFQEEACRELQRSYKKNRSYDWTVVDKVAENFGLHNVIGGKMGRQFVDILCKLMRKDMRHILARILGLLGDCDLISCTKVSRTWRKIICQDQLALQRWKKAEKTRRDSGRSMGSLSRDFTLDRVVFSCMQTVSSPPAHKAVKKPPCHMGGAQNATKSSRFQQYVEAAQSLKQHESLRRCSRCSSPARFDAVMQRAVCTRISCAFEFCTLCQSAFHDSTPCRNTVRSFSSTQKTLVAGSARSKRSIRRL.

Residues 25–67 (EVKGHKVSPRKTGALSLRSPAATNVSTPLESRSKGPHNKENYQ) are disordered. Residues 45 to 54 (AATNVSTPLE) show a composition bias toward polar residues. Over residues 55-67 (SRSKGPHNKENYQ) the composition is skewed to basic and acidic residues. Residues 187-234 (CKLMRKDMRHILARILGLLGDCDLISCTKVSRTWRKIICQDQLALQRW) enclose the F-box domain. The ZBR-type zinc finger occupies 311 to 359 (SLRRCSRCSSPARFDAVMQRAVCTRISCAFEFCTLCQSAFHDSTPCRNT). Zn(2+) is bound by residues C315, C318, C333, C338, C343, C346, H351, and C356.

As to quaternary structure, part of a SCF (SKP1-cullin-F-box) protein ligase complex.

It localises to the nucleus. It is found in the cytoplasm. The protein operates within protein modification; protein ubiquitination. In terms of biological role, during embryonic development, regulates the integrity of the genome and therefore the cell cycle progression by preventing rereplication through an APC-Cdh1-dependent mechanism. The sequence is that of F-box only protein 5 from Danio rerio (Zebrafish).